We begin with the raw amino-acid sequence, 351 residues long: Dihydroorotate dehydrogenase (quinone) (351 aa).

Residues 61–65 and threonine 85 contribute to the FMN site; that span reads AGLDK. Lysine 65 is a binding site for substrate. Substrate is bound at residue 110–114; the sequence is NRMGF. Residues asparagine 139 and asparagine 172 each contribute to the FMN site. Substrate is bound at residue asparagine 172. The Nucleophile role is filled by serine 175. Asparagine 177 contacts substrate. Residues lysine 217 and threonine 245 each coordinate FMN. 246–247 lines the substrate pocket; it reads NT. Residues glycine 268, glycine 297, and 318–319 contribute to the FMN site; that span reads YS.

It belongs to the dihydroorotate dehydrogenase family. Type 2 subfamily. Monomer. It depends on FMN as a cofactor.

Its subcellular location is the cell membrane. It carries out the reaction (S)-dihydroorotate + a quinone = orotate + a quinol. It functions in the pathway pyrimidine metabolism; UMP biosynthesis via de novo pathway; orotate from (S)-dihydroorotate (quinone route): step 1/1. Catalyzes the conversion of dihydroorotate to orotate with quinone as electron acceptor. The sequence is that of Dihydroorotate dehydrogenase (quinone) from Xanthomonas euvesicatoria pv. vesicatoria (strain 85-10) (Xanthomonas campestris pv. vesicatoria).